A 201-amino-acid polypeptide reads, in one-letter code: Peptidyl-tRNA hydrolase (201 aa).

Tyr15 contacts tRNA. The active-site Proton acceptor is the His20. The tRNA site is built by Tyr66, Asn68, and Asn114.

It belongs to the PTH family. Monomer.

Its subcellular location is the cytoplasm. The catalysed reaction is an N-acyl-L-alpha-aminoacyl-tRNA + H2O = an N-acyl-L-amino acid + a tRNA + H(+). Hydrolyzes ribosome-free peptidyl-tRNAs (with 1 or more amino acids incorporated), which drop off the ribosome during protein synthesis, or as a result of ribosome stalling. Its function is as follows. Catalyzes the release of premature peptidyl moieties from peptidyl-tRNA molecules trapped in stalled 50S ribosomal subunits, and thus maintains levels of free tRNAs and 50S ribosomes. This Burkholderia mallei (strain NCTC 10247) protein is Peptidyl-tRNA hydrolase.